The following is a 148-amino-acid chain: Transcriptional regulator MraZ (148 aa).

SpoVT-AbrB domains follow at residues 7-56 (KERH…EPDI) and 85-128 (LDVV…APER).

The protein belongs to the MraZ family. In terms of assembly, forms oligomers.

Its subcellular location is the cytoplasm. The protein localises to the nucleoid. The sequence is that of Transcriptional regulator MraZ from Chlorobium phaeobacteroides (strain DSM 266 / SMG 266 / 2430).